Consider the following 263-residue polypeptide: Probable ribosomal RNA small subunit methyltransferase A (263 aa).

Residues Leu12, Gly37, Glu58, Asp83, and Asn100 each coordinate S-adenosyl-L-methionine.

Belongs to the class I-like SAM-binding methyltransferase superfamily. rRNA adenine N(6)-methyltransferase family. RsmA subfamily.

The protein localises to the cytoplasm. Specifically dimethylates two adjacent adenosines in the loop of a conserved hairpin near the 3'-end of 16S rRNA in the 30S particle. May play a critical role in biogenesis of 30S subunits. The protein is Probable ribosomal RNA small subunit methyltransferase A of Methanococcus maripaludis (strain C5 / ATCC BAA-1333).